The sequence spans 470 residues: ATP synthase subunit beta (470 aa).

157–164 lines the ATP pocket; that stretch reads GGAGVGKT.

Belongs to the ATPase alpha/beta chains family. F-type ATPases have 2 components, CF(1) - the catalytic core - and CF(0) - the membrane proton channel. CF(1) has five subunits: alpha(3), beta(3), gamma(1), delta(1), epsilon(1). CF(0) has three main subunits: a(1), b(2) and c(9-12). The alpha and beta chains form an alternating ring which encloses part of the gamma chain. CF(1) is attached to CF(0) by a central stalk formed by the gamma and epsilon chains, while a peripheral stalk is formed by the delta and b chains.

The protein localises to the cell membrane. It carries out the reaction ATP + H2O + 4 H(+)(in) = ADP + phosphate + 5 H(+)(out). Produces ATP from ADP in the presence of a proton gradient across the membrane. The catalytic sites are hosted primarily by the beta subunits. The polypeptide is ATP synthase subunit beta (Pelotomaculum thermopropionicum (strain DSM 13744 / JCM 10971 / SI)).